Here is a 508-residue protein sequence, read N- to C-terminus: Anaerobic nitric oxide reductase transcription regulator NorR (508 aa).

D56 is subject to 4-aspartylphosphate. The 230-residue stretch at 186–415 (MIGQSPAMAR…LEHAIHRAAV (230 aa)) folds into the Sigma-54 factor interaction domain. ATP is bound by residues 214–221 (GETGVGKE) and 277–286 (ADQGTLFLDE). Positions 483-502 (WAATARALELDSGNLHRLAK) form a DNA-binding region, H-T-H motif.

Its pathway is nitrogen metabolism; nitric oxide reduction. Required for the expression of anaerobic nitric oxide (NO) reductase, acts as a transcriptional activator for at least the norVW operon. Activation also requires sigma-54. The sequence is that of Anaerobic nitric oxide reductase transcription regulator NorR from Aeromonas hydrophila subsp. hydrophila (strain ATCC 7966 / DSM 30187 / BCRC 13018 / CCUG 14551 / JCM 1027 / KCTC 2358 / NCIMB 9240 / NCTC 8049).